The following is a 150-amino-acid chain: MFNGRTQDYDDTVITNNGFWSDIYVEEFQKQRAIPLQIPVEMVKAALVAAIQGVDLDLADVAESYRKSAVNSVTEISSPLINDENYAETLYKKAVFARAKAELLPEFNTLSGREIHQNRDYVTEQKSLLAEATHAIRTLKGKKRGSVWLL.

The protein to phage P2 protein L.

This chain is Probable head completion/stabilization protein, found in Haemophilus phage HP1 (strain HP1c1) (Bacteriophage HP1).